Reading from the N-terminus, the 191-residue chain is Calcium-activated potassium channel subunit beta-1 (191 aa).

Residues 1–15 lie on the Cytoplasmic side of the membrane; that stretch reads MGKKLVMAQKRGETR. A helical transmembrane segment spans residues 16 to 36; the sequence is ALCLGVAMVMCAVITYYILGT. Residues 37–157 are Extracellular-facing; that stretch reads TMLPLYQKSV…YQRLYGPQAL (121 aa). 2 N-linked (GlcNAc...) asparagine glycosylation sites follow: Asn80 and Asn142. The chain crosses the membrane as a helical span at residues 158–178; that stretch reads LASLFWPTFLLTGGLLIIAMV. The Cytoplasmic segment spans residues 179–191; it reads KINRSLSILAAQK.

The protein belongs to the KCNMB (TC 8.A.14.1) family. KCNMB1 subfamily. In terms of assembly, interacts with KCNMA1 tetramer. There are probably 4 molecules of KCMNB1 per KCNMA1 tetramer. Post-translationally, N-glycosylated.

It localises to the membrane. Functionally, regulatory subunit of the calcium activated potassium KCNMA1 (maxiK) channel. Modulates the calcium sensitivity and gating kinetics of KCNMA1, thereby contributing to KCNMA1 channel diversity. Increases the apparent Ca(2+)/voltage sensitivity of the KCNMA1 channel. It also modifies KCNMA1 channel kinetics and alters its pharmacological properties. It slows down the activation and the deactivation kinetics of the channel. Acts as a negative regulator of smooth muscle contraction by enhancing the calcium sensitivity to KCNMA1. Its presence is also a requirement for internal binding of the KCNMA1 channel opener dehydrosoyasaponin I (DHS-1) triterpene glycoside and for external binding of the agonist hormone 17-beta-estradiol (E2). Increases the binding activity of charybdotoxin (CTX) toxin to KCNMA1 peptide blocker by increasing the CTX association rate and decreasing the dissociation rate. The chain is Calcium-activated potassium channel subunit beta-1 (KCNMB1) from Oryctolagus cuniculus (Rabbit).